The chain runs to 247 residues: 5-hydroxytryptamine receptor 2A (247 aa).

Position 1 (Lys-1) is a topological domain, extracellular. Residues 2 to 26 traverse the membrane as a helical segment; it reads LCAIWIYLDVLFSTASIMHLCAISL. An intrachain disulfide couples Cys-3 to Cys-82. Asp-10 provides a ligand contact to serotonin. The DRY motif; important for ligand-induced conformation changes motif lies at 27–29; it reads DRY. At 27–46 the chain is on the cytoplasmic side; that stretch reads DRYVAIQNPIHHSRFNSRTK. The helical transmembrane segment at 47 to 70 threads the bilayer; it reads AFLKIIAVWTISVGISMPVPVFGL. Residues 71–87 are Extracellular-facing; sequence QDDSKVFKEGSCLLADD. A helical membrane pass occupies residues 88–113; it reads NFVLIGSFVAFFIPLTIMVITYFLTI. Residues 114 to 177 lie on the Cytoplasmic side of the membrane; sequence KSLQKEATLC…QSISNEQKAC (64 aa). Residue Ser-135 is modified to Phosphoserine. The chain crosses the membrane as a helical span at residues 178–203; that stretch reads KVLGIVFFLFVVMWCPFFVTNIMAVI. A serotonin-binding site is contributed by Asn-198. A disulfide bond links Cys-204 and Cys-208. Residues 204–211 are Extracellular-facing; that stretch reads CKESCNED. A helical membrane pass occupies residues 212–237; that stretch reads VIGALLNVFVWIGYLSSAVNPLVYTL. The short motif at 231 to 235 is the NPxxY motif; important for ligand-induced conformation changes and signaling element; it reads NPLVY. At 238-247 the chain is on the cytoplasmic side; sequence FNKTYRSAFA.

The protein belongs to the G-protein coupled receptor 1 family. In terms of assembly, interacts (via C-terminus) with MPDZ and PATJ. May interact (via C-terminus) with MPP3, PRDX6, DLG4, DLG1, CASK, APBA1 and MAGI2. Interacts with GRM2 and DRD2; this may affect signaling. Detected in adult intestine, especially in mucosal epithelium, longitudinal and circular layers of muscularis externa and myenteric plexuses. Highly expressed in Paneth cells, and detected at lower levels in enterocytes (at protein level).

The protein resides in the cell membrane. The protein localises to the cell projection. It is found in the dendrite. Its subcellular location is the axon. It localises to the cytoplasmic vesicle. The protein resides in the membrane. The protein localises to the caveola. It is found in the presynapse. G-protein coupled receptor activity is regulated by lipids: oleamide increases HTR2A-mediated activity. In terms of biological role, G-protein coupled receptor for 5-hydroxytryptamine (serotonin). Also functions as a receptor for various drugs and psychoactive substances, including mescaline, psilocybin, 1-(2,5-dimethoxy-4-iodophenyl)-2-aminopropane (DOI) and lysergic acid diethylamide (LSD). Ligand binding causes a conformation change that triggers signaling via guanine nucleotide-binding proteins (G proteins) and modulates the activity of downstream effectors. HTR2A is coupled to G(q)/G(11) G alpha proteins and activates phospholipase C-beta, releasing diacylglycerol (DAG) and inositol 1,4,5-trisphosphate (IP3) second messengers that modulate the activity of phosphatidylinositol 3-kinase and promote the release of Ca(2+) ions from intracellular stores, respectively. Beta-arrestin family members inhibit signaling via G proteins and mediate activation of alternative signaling pathways. Affects neural activity, perception, cognition and mood. Plays a role in the regulation of behavior, including responses to anxiogenic situations and psychoactive substances. Plays a role in intestinal smooth muscle contraction, and may play a role in arterial vasoconstriction. In Cavia porcellus (Guinea pig), this protein is 5-hydroxytryptamine receptor 2A (HTR2A).